A 299-amino-acid polypeptide reads, in one-letter code: Probable alpha-L-glutamate ligase (299 aa).

Positions 111–293 (LQALAAANIA…VATQMIAYLE (183 aa)) constitute an ATP-grasp domain. ATP is bound by residues lysine 147, 184-185 (DF), aspartate 193, and 217-219 (RAN). The Mg(2+) site is built by aspartate 254, glutamate 266, and asparagine 268. 3 residues coordinate Mn(2+): aspartate 254, glutamate 266, and asparagine 268.

Belongs to the RimK family. Mg(2+) is required as a cofactor. Mn(2+) serves as cofactor.

This is Probable alpha-L-glutamate ligase from Mannheimia succiniciproducens (strain KCTC 0769BP / MBEL55E).